We begin with the raw amino-acid sequence, 805 residues long: Arginine/serine-rich protein PNISR (805 aa).

Positions 74–88 are enriched in polar residues; sequence PNNHGNFQGDSNFNR. Disordered stretches follow at residues 74 to 331 and 382 to 805; these read PNNH…EEKE and LTGL…SRSR. 2 stretches are compositionally biased toward pro residues: residues 100-115 and 183-195; these read PPHP…PTPG and YWQP…PAPP. The span at 197–210 shows a compositional bias: basic and acidic residues; it reads NRRERPSSFRDRQR. 2 positions are modified to phosphoserine: serine 204 and serine 211. A Glycyl lysine isopeptide (Lys-Gly) (interchain with G-Cter in SUMO2) cross-link involves residue lysine 218. Positions 237–276 form a coiled coil; that stretch reads REGLEKMEREKQKKLEKERMEQQRSQLSKKEKKATEDAEG. The segment covering 238–258 has biased composition (basic and acidic residues); that stretch reads EGLEKMEREKQKKLEKERMEQ. Phosphoserine is present on residues serine 290, serine 304, serine 313, and serine 321. The span at 290–299 shows a compositional bias: acidic residues; it reads SDEEEEDTEN. The span at 384–393 shows a compositional bias: gly residues; that stretch reads GLGGLGGYGS. The segment covering 421-463 has biased composition (basic and acidic residues); that stretch reads QKQEAFWRKEKEQQLLHDKQMEEEKQQTERVTKEMNEFIHKEQ. Residues 429–461 adopt a coiled-coil conformation; that stretch reads KEKEQQLLHDKQMEEEKQQTERVTKEMNEFIHK. Phosphoserine occurs at positions 465 and 467. 2 stretches are compositionally biased toward basic and acidic residues: residues 470–486 and 494–506; these read EARE…KRTP and EPKK…EKQG. Threonine 485 bears the Phosphothreonine mark. A Glycyl lysine isopeptide (Lys-Gly) (interchain with G-Cter in SUMO2) cross-link involves residue lysine 496. Residues 508 to 550 are compositionally biased toward low complexity; the sequence is SRSGSSSSGSSSSNSRTSSTSSTVSSSSYSSSSGSSRTSSRSS. Basic residues-rich tracts occupy residues 551–579, 587–598, and 607–639; these read SPKR…YSRR, ARVKIRDRRRSN, and RRNR…SRDR. Residues 659–721 show a composition bias toward basic and acidic residues; that stretch reads EAKEQERKKE…KRKRESERTF (63 aa). The stretch at 673–703 forms a coiled coil; it reads IDKDRKKKDKEREREQDKRKEKQKREEKDFK. Lysine 703 participates in a covalent cross-link: Glycyl lysine isopeptide (Lys-Gly) (interchain with G-Cter in SUMO2). Residue serine 726 is modified to Phosphoserine. Over residues 732 to 753 the composition is skewed to basic and acidic residues; sequence IRHDSRQDSKKSTTKDSKKHSG. Residues 754–767 show a composition bias toward low complexity; it reads SDSSGRSSSESPGS. Basic residues-rich tracts occupy residues 771 to 781 and 789 to 805; these read KKAKKPKHSRS and RSGK…SRSR.

Belongs to the splicing factor SR family. As to quaternary structure, interacts with PNN. In terms of tissue distribution, expressed in heart, skeletal muscle, thymus, spleen, kidney, liver, placenta and leukocytes.

It localises to the nucleus speckle. The sequence is that of Arginine/serine-rich protein PNISR (PNISR) from Homo sapiens (Human).